The primary structure comprises 334 residues: Iron-uptake system permease protein FeuB (334 aa).

A run of 9 helical transmembrane segments spans residues 9–29 (IILITSPFAIALSLLLSILYG), 63–83 (AAGALLIGAALAVSGALMQGI), 91–111 (PSIMGVSDGSAFIITLCMVLL), 119–139 (MMIYSFIGSALGAVLVFGLAA), 150–170 (LAIIGTVTSMLLSSLSAAMSI), 191–211 (PDFLKLAAPFFLIGIIMAISL), 243–263 (VIILTGSAVALAGKIAFVGLV), 281–301 (PCSCILGGIFLTLCDLASRFI), and 305–325 (FETPIEVVTSIIGVPFFLYLI).

It belongs to the binding-protein-dependent transport system permease family. FecCD subfamily. The complex is composed of one ATP-binding protein (YusV), two transmembrane proteins (FeuB and FeuC) and a solute-binding protein (FeuA).

It localises to the cell membrane. It is found in the membrane raft. Functionally, involved in the uptake of iron. Probably responsible for the translocation of the substrate across the membrane. In terms of biological role, part of the ABC transporter complex FeuABC/YusV involved in import of the catecholate siderophores bacillibactin and enterobactin. The chain is Iron-uptake system permease protein FeuB (feuB) from Bacillus subtilis (strain 168).